Consider the following 41-residue polypeptide: Large ribosomal subunit protein bL36 (41 aa).

This sequence belongs to the bacterial ribosomal protein bL36 family.

The chain is Large ribosomal subunit protein bL36 from Vibrio vulnificus (strain YJ016).